The primary structure comprises 198 residues: MLRSFLLIVATVSLFGQCKPLPLATSPVSDAVRAPHRSTHETRFVRTNDEERGATMTLAGVLRDKAQTKQLLTSWLNSGKSVPSVSNKLGLKRMSLEQAIHHENWKALTTFQRMKSKKAKAYAKYGTGYQTEAKTKENLLQWVMRGDSPKEVSSTLGLLGLSRRKIIDHQNYEAFRTFLKYRKQWAEMQGNGFTKLTT.

Positions 1–20 (MLRSFLLIVATVSLFGQCKP) are cleaved as a signal peptide. The RxLR-dEER motif lies at 43–52 (RFVRTNDEER).

It belongs to the RxLR effector family.

It localises to the secreted. The protein localises to the host cytoplasm. It is found in the host nucleus. Its subcellular location is the host nucleolus. Functionally, effector that is involved in host plant infection. Contributes to virulence during the early infection stage, by inhibiting plant defense responses induced by both PAMP-triggered immunity (PTI) and effector-triggered immunity (ETI). This Phytophthora infestans (strain T30-4) (Potato late blight agent) protein is RxLR effector protein CRE4 (CRE4).